A 127-amino-acid polypeptide reads, in one-letter code: Fatty acid-binding protein, liver (127 aa).

An N-acetylmethionine modification is found at Met-1. Residue Ser-11 is modified to Phosphoserine. Lys-31 and Lys-36 each carry N6-succinyllysine. Phosphoserine is present on Ser-39. Lys-46 is modified (N6-succinyllysine). Thr-51 carries the phosphothreonine modification. The residue at position 56 (Ser-56) is a Phosphoserine. An N6-succinyllysine mark is found at Lys-57, Lys-78, and Lys-90. Ser-100 carries the post-translational modification Phosphoserine. The residue at position 121 (Lys-121) is an N6-succinyllysine.

The protein belongs to the calycin superfamily. Fatty-acid binding protein (FABP) family. Monomer.

Its subcellular location is the cytoplasm. Plays a role in lipoprotein-mediated cholesterol uptake in hepatocytes. Binds cholesterol. Binds free fatty acids and their coenzyme A derivatives, bilirubin, and some other small molecules in the cytoplasm. May be involved in intracellular lipid transport. The protein is Fatty acid-binding protein, liver (FABP1) of Sus scrofa (Pig).